A 341-amino-acid polypeptide reads, in one-letter code: Thiamine-phosphate synthase (341 aa).

The segment at Met-1 to Arg-123 is unknown. The interval Ala-61–Val-80 is disordered. The interval Val-124 to Gly-341 is thiamine-phosphate synthase. 4-amino-2-methyl-5-(diphosphooxymethyl)pyrimidine is bound by residues Gln-171 to Lys-175 and Asn-203. Residues Asp-204 and Asp-223 each contribute to the Mg(2+) site. Ser-242 is a 4-amino-2-methyl-5-(diphosphooxymethyl)pyrimidine binding site. Thr-268–Thr-270 is a binding site for 2-[(2R,5Z)-2-carboxy-4-methylthiazol-5(2H)-ylidene]ethyl phosphate. Lys-271 is a binding site for 4-amino-2-methyl-5-(diphosphooxymethyl)pyrimidine. Gly-298 lines the 2-[(2R,5Z)-2-carboxy-4-methylthiazol-5(2H)-ylidene]ethyl phosphate pocket.

The protein belongs to the thiamine-phosphate synthase family. Requires Mg(2+) as cofactor.

The enzyme catalyses 2-[(2R,5Z)-2-carboxy-4-methylthiazol-5(2H)-ylidene]ethyl phosphate + 4-amino-2-methyl-5-(diphosphooxymethyl)pyrimidine + 2 H(+) = thiamine phosphate + CO2 + diphosphate. It carries out the reaction 2-(2-carboxy-4-methylthiazol-5-yl)ethyl phosphate + 4-amino-2-methyl-5-(diphosphooxymethyl)pyrimidine + 2 H(+) = thiamine phosphate + CO2 + diphosphate. The catalysed reaction is 4-methyl-5-(2-phosphooxyethyl)-thiazole + 4-amino-2-methyl-5-(diphosphooxymethyl)pyrimidine + H(+) = thiamine phosphate + diphosphate. The protein operates within cofactor biosynthesis; thiamine diphosphate biosynthesis; thiamine phosphate from 4-amino-2-methyl-5-diphosphomethylpyrimidine and 4-methyl-5-(2-phosphoethyl)-thiazole: step 1/1. Its function is as follows. Condenses 4-methyl-5-(beta-hydroxyethyl)thiazole monophosphate (THZ-P) and 2-methyl-4-amino-5-hydroxymethyl pyrimidine pyrophosphate (HMP-PP) to form thiamine monophosphate (TMP). In Gloeobacter violaceus (strain ATCC 29082 / PCC 7421), this protein is Thiamine-phosphate synthase.